The following is a 393-amino-acid chain: Succinate--CoA ligase [ADP-forming] subunit beta (393 aa).

An ATP-grasp domain is found at 9-242 (KELFAKHGVP…RAATDPLEWK (234 aa)). ATP contacts are provided by residues Lys-45, 52–54 (GRG), Ser-94, and Glu-99. Asn-191 and Asp-211 together coordinate Mg(2+). Residues Asn-262 and 324 to 326 (GIT) contribute to the substrate site.

Belongs to the succinate/malate CoA ligase beta subunit family. As to quaternary structure, heterotetramer of two alpha and two beta subunits. Requires Mg(2+) as cofactor.

The catalysed reaction is succinate + ATP + CoA = succinyl-CoA + ADP + phosphate. It carries out the reaction GTP + succinate + CoA = succinyl-CoA + GDP + phosphate. Its pathway is carbohydrate metabolism; tricarboxylic acid cycle; succinate from succinyl-CoA (ligase route): step 1/1. Its function is as follows. Succinyl-CoA synthetase functions in the citric acid cycle (TCA), coupling the hydrolysis of succinyl-CoA to the synthesis of either ATP or GTP and thus represents the only step of substrate-level phosphorylation in the TCA. The beta subunit provides nucleotide specificity of the enzyme and binds the substrate succinate, while the binding sites for coenzyme A and phosphate are found in the alpha subunit. This is Succinate--CoA ligase [ADP-forming] subunit beta from Mycobacterium leprae (strain Br4923).